Consider the following 198-residue polypeptide: DNA polymerase zeta subunit 2 (198 aa).

An HORMA domain is found at 4–196 (EIKADIIVEA…DLGLKMDVLI (193 aa)).

The protein belongs to the MAD2 family. As to quaternary structure, accessory subunit of the zeta DNA polymerase complex, which consists of the catalytic component PolZ1/DNApol-zeta and PolZ2/Rev7. Interacts with the apurinic/apyrimidinic (AP) endonuclease Rrp1 (via the N-terminus).

In terms of biological role, as the accessory component of the DNA polymerase zeta complex, involved in translesion DNA synthesis (TLS) and various DNA repair mechanisms. Promotes the apurinic/apyrimidinic (AP) endonuclease activity of Rrp1 and is therefore likely to be involved in the base excision repair (BER) pathway responsible for repair of DNA lesions. It does not appear to influence the synthesis activity of the catalytic component Dmpol-zeta. This Drosophila melanogaster (Fruit fly) protein is DNA polymerase zeta subunit 2.